The sequence spans 353 residues: MKVLGIESSCDETGVAVYDTALSGVPALRAHAVYSQIALHAEYGGVVPELASRDHVRKLLPLIRQTLGEAGLRIDELDGVAYTAGPGLVGALLVGAGVARSLAWALDVPAIGVHHMEGHLLAPLMEDDPPQAPFVALLVSGGHTQLVSVKALGSYEVLGETLDDAAGEAFDKTAKMMGLPYPGGPQLAALAETGTPGRYKFARPMTDRPGLDFSFSGLKTQVLLAWRSSDQSDTTRADIARGFEDAVVETLAIKCLRALDAAGCNTLVVAGGVGANKRLRARLQEAAQRRGGRVCFPRPALCTDNGAMIAFAGALRLQAGEHADAAVHVTPRWDMACLPPLAAARESGVGNRE.

Residues His115 and His119 each contribute to the Fe cation site. Substrate contacts are provided by residues 138 to 142 (LVSGG), Asp171, Gly184, and Asn276. Asp304 contacts Fe cation.

This sequence belongs to the KAE1 / TsaD family. The cofactor is Fe(2+).

Its subcellular location is the cytoplasm. The enzyme catalyses L-threonylcarbamoyladenylate + adenosine(37) in tRNA = N(6)-L-threonylcarbamoyladenosine(37) in tRNA + AMP + H(+). Functionally, required for the formation of a threonylcarbamoyl group on adenosine at position 37 (t(6)A37) in tRNAs that read codons beginning with adenine. Is involved in the transfer of the threonylcarbamoyl moiety of threonylcarbamoyl-AMP (TC-AMP) to the N6 group of A37, together with TsaE and TsaB. TsaD likely plays a direct catalytic role in this reaction. This is tRNA N6-adenosine threonylcarbamoyltransferase from Xanthomonas euvesicatoria pv. vesicatoria (strain 85-10) (Xanthomonas campestris pv. vesicatoria).